Consider the following 184-residue polypeptide: Late embryogenesis abundant protein (184 aa).

The interval 49-184 (TGNIAEYPTE…KLPGHHNHHP (136 aa)) is disordered. The segment covering 60–86 (PPAGVAAGTGAAATTAAGVTTSETTTG) has biased composition (low complexity). Basic and acidic residues-rich tracts occupy residues 87–98 (QEHHGSLGEHLR) and 122–138 (KDKI…KDEQ). Residues 139 to 159 (TPTTATTTGPTTTTTTTGAAA) are compositionally biased toward low complexity. Basic and acidic residues predominate over residues 160-177 (DQHHEKKGILEKIKEKLP).

It belongs to the plant dehydrin family.

Functionally, LEA protein are late embryogenesis abundant in higher plant seed embryos. There are two subsets of LEA proteins (5a, and 5b), the first ones are expressed when the cotyledon weight reach 80 mg and the second set are expressed above 100 mg. The function of those proteins is not known. The protein is Late embryogenesis abundant protein of Raphanus sativus (Radish).